A 308-amino-acid chain; its full sequence is Elongation factor Ts (308 aa).

The interval 80 to 83 (TDFV) is involved in Mg(2+) ion dislocation from EF-Tu.

It belongs to the EF-Ts family.

It is found in the cytoplasm. Functionally, associates with the EF-Tu.GDP complex and induces the exchange of GDP to GTP. It remains bound to the aminoacyl-tRNA.EF-Tu.GTP complex up to the GTP hydrolysis stage on the ribosome. This chain is Elongation factor Ts, found in Rhizobium etli (strain CIAT 652).